A 130-amino-acid polypeptide reads, in one-letter code: MTANTSTSDTLAHLARVIESRLPQNGGDPDTSYVARLLHKGPNAFLKKIGEEATEVVMAAKDADNGGDKTKVVYEVADLWFHCMIALAHYGLSPADVVVELDRRAGTSGIEEKAMRKVTAREDEQPGAAQ.

It belongs to the PRA-PH family.

The protein resides in the cytoplasm. The enzyme catalyses 1-(5-phospho-beta-D-ribosyl)-ATP + H2O = 1-(5-phospho-beta-D-ribosyl)-5'-AMP + diphosphate + H(+). Its pathway is amino-acid biosynthesis; L-histidine biosynthesis; L-histidine from 5-phospho-alpha-D-ribose 1-diphosphate: step 2/9. This chain is Phosphoribosyl-ATP pyrophosphatase, found in Albidiferax ferrireducens (strain ATCC BAA-621 / DSM 15236 / T118) (Rhodoferax ferrireducens).